The chain runs to 706 residues: ATP-dependent DNA helicase HMI1, mitochondrial (706 aa).

Positions 5-277 (TPSQWKVINK…LKLFDNFRST (273 aa)) constitute a UvrD-like helicase ATP-binding domain. Residues 29-34 (GSGKTL) and arginine 275 contribute to the ATP site. The region spanning 278–593 (PEIISLASKI…KLSTIHSAKG (316 aa)) is the UvrD-like helicase C-terminal domain. A propeptide spans 693 to 706 (YSSLRGCKSVFRRI) (cleaved upon import into mitochondrion).

This sequence belongs to the helicase family. UvrD subfamily. Mg(2+) is required as a cofactor.

It localises to the mitochondrion inner membrane. The catalysed reaction is Couples ATP hydrolysis with the unwinding of duplex DNA by translocating in the 3'-5' direction.. It carries out the reaction ATP + H2O = ADP + phosphate + H(+). Required for mitochondrial genome maintenance and mitochondrial DNA inheritance. This chain is ATP-dependent DNA helicase HMI1, mitochondrial (HMI1), found in Saccharomyces cerevisiae (strain ATCC 204508 / S288c) (Baker's yeast).